The chain runs to 196 residues: Putative adenylate kinase (196 aa).

The ATP site is built by Gly-10, Gly-12, Lys-13, Thr-14, and Ser-15. The interval 30–53 is NMP; the sequence is YLNDLIKEEHLYSEVDEERDSVIA. The LID stretch occupies residues 118-128; it reads KRGYSEEKINE. Arg-119 is a binding site for ATP.

This sequence belongs to the adenylate kinase family. AK6 subfamily. In terms of assembly, interacts with uS11. Not a structural component of 40S pre-ribosomes, but transiently interacts with them by binding to uS11.

It catalyses the reaction AMP + ATP = 2 ADP. It carries out the reaction ATP + H2O = ADP + phosphate + H(+). Its function is as follows. Broad-specificity nucleoside monophosphate (NMP) kinase that catalyzes the reversible transfer of the terminal phosphate group between nucleoside triphosphates and monophosphates. Also has ATPase activity. Involved in the late maturation steps of the 30S ribosomal particles, specifically 16S rRNA maturation. While NMP activity is not required for ribosome maturation, ATPase activity is. Associates transiently with small ribosomal subunit protein uS11. ATP hydrolysis breaks the interaction with uS11. May temporarily remove uS11 from the ribosome to enable a conformational change of the ribosomal RNA that is needed for the final maturation step of the small ribosomal subunit. In Methanosarcina mazei (strain ATCC BAA-159 / DSM 3647 / Goe1 / Go1 / JCM 11833 / OCM 88) (Methanosarcina frisia), this protein is Putative adenylate kinase.